The sequence spans 1593 residues: MAAAAVVVPAEWIKNWEKSGRGEFLHLCRILSENKSHDSSTYRDFQQALYELSYHVIKGNLKHEQASNVLSDISEFREDMPSILADVFCILDIETNCLEEKSKRDYFTQLVLACLYLVSDTVLKERLDPETLESLGLIKQSQQFNQKSVKIKTKLFYKQQKFNLLREENEGYAKLIAELGQDLSGSITSDLILENIKSLIGCFNLDPNRVLDVILEVFECRPEHDDFFISLLESYMSMCEPQTLCHILGFKFKFYQEPNGETPSSLYRVAAVLLQFNLIDLDDLYVHLLPADNCIMDEHKREIAEAKQIVRKLTMVVLSSEKMDEREKEKEKEEEKVEKPPDNQKLGLLEALLKIGDWQHAQNIMDQMPPYYAASHKLIALAICKLIHITIEPLYRRVGVPKGAKGSPVNALQNKRAPKQAESFEDLRRDVFNMFCYLGPHLSHDPILFAKVVRIGKSFMKEFQSDGSKQEDKEKTEVILSCLLSITDQVLLPSLSLMDCNACMSEELWGMFKTFPYQHRYRLYGQWKNETYNSHPLLVKVKAQTIDRAKYIMKRLTKENVKPSGRQIGKLSHSNPTILFDYILSQIQKYDNLITPVVDSLKYLTSLNYDVLAYCIIEALANPEKERMKHDDTTISSWLQSLASFCGAVFRKYPIDLAGLLQYVANQLKAGKSFDLLILKEVVQKMAGIEITEEMTMEQLEAMTGGEQLKAEGGYFGQIRNTKKSSQRLKDALLDHDLALPLCLLMAQQRNGVIFQEGGEKHLKLVGKLYDQCHDTLVQFGGFLASNLSTEDYIKRVPSIDVLCNEFHTPHDAAFFLSRPMYAHHISSKYDELKKSEKGSKQQHKVHKYITSCEMVMAPVHEAVVSLHVSKVWDDISPQFYATFWSLTMYDLAVPHTSYEREVNKLKVQMKAIDDNQEMPPNKKKKEKERCTALQDKLLEEEKKQMEHVQRVLQRLKLEKDNWLLAKSTKNETITKFLQLCIFPRCIFSAIDAVYCARFVELVHQQKTPNFSTLLCYDRVFSDIIYTVASCTENEASRYGRFLCCMLETVTRWHSDRATYEKECGNYPGFLTILRATGFDGGNKADQLDYENFRHVVHKWHYKLTKASVHCLETGEYTHIRNILIVLTKILPWYPKVLNLGQALERRVHKICQEEKEKRPDLYALAMGYSGQLKSRKSYMIPENEFHHKDPPPRNAVASVQNGPGGGPSSSSIGSASKSDESSTEETDKSRERSQCGVKAVNKASSTTPKGNSSNGNSGSNSNKAVKENDKEKGKEKEKEKKEKTPATTPEARVLGKDGKEKPKEERPNKDEKARETKERTPKSDKEKEKFKKEEKAKDEKFKTTVPNAESKSTQEREREKEPSRERDIAKEMKSKENVKGGEKTPVSGSLKSPVPRSDIPEPEREQKRRKIDTHPSPSHSSTVKDSLIELKESSAKLYINHTPPPLSKSKEREMDKKDLDKSRERSREREKKDEKDRKERKRDHSNNDREVPPDLTKRRKEENGTMGVSKHKSESPCESPYPNEKDKEKNKSKSSGKEKGSDSFKSEKMDKISSGGKKESRHDKEKIEKKEKRDSSGGKEEKKHHKSSDKHR.

An anchor domain; interaction with THOC5 and THOC7 region spans residues 1-163 (MAAAAVVVPA…KLFYKQQKFN (163 aa)). Residues 164 to 534 (LLREENEGYA…GQWKNETYNS (371 aa)) form a bow domain; interaction with THOC1 dock domain and THOC3 region. The tract at residues 322-341 (KMDEREKEKEKEEEKVEKPP) is disordered. An MIF4G domain; interaction with THOC3 and DDX39B region spans residues 535 to 686 (HPLLVKVKAQ…LILKEVVQKM (152 aa)). The interval 687–1174 (AGIEITEEMT…LAMGYSGQLK (488 aa)) is stern domain. The stretch at 896–965 (HTSYEREVNK…LKLEKDNWLL (70 aa)) forms a coiled coil. The short motif at 923–928 (KKKKEK) is the Nuclear localization signal element. The interval 1175–1593 (SRKSYMIPEN…KHHKSSDKHR (419 aa)) is charged domain. The tract at residues 1184-1593 (NEFHHKDPPP…KHHKSSDKHR (410 aa)) is disordered. The segment covering 1218 to 1234 (KSDESSTEETDKSRERS) has biased composition (basic and acidic residues). Phosphoserine is present on S1222. Positions 1251 to 1263 (GNSSNGNSGSNSN) are enriched in low complexity. Composition is skewed to basic and acidic residues over residues 1265-1285 (AVKE…KEKT), 1294-1343 (VLGK…EKFK), and 1353-1383 (STQE…KGGE). The residue at position 1385 (T1385) is a Phosphothreonine. Phosphoserine is present on residues S1390, S1393, and S1417. Residues 1416–1425 (PSPSHSSTVK) show a composition bias toward polar residues. A Phosphothreonine modification is found at T1443. Positions 1449 to 1504 (KSKEREMDKKDLDKSRERSREREKKDEKDRKERKRDHSNNDREVPPDLTKRRKEEN) are enriched in basic and acidic residues. Phosphoserine occurs at positions 1450, 1486, and 1516. Basic and acidic residues predominate over residues 1524 to 1582 (NEKDKEKNKSKSSGKEKGSDSFKSEKMDKISSGGKKESRHDKEKIEKKEKRDSSGGKEE). Residues 1583–1593 (KKHHKSSDKHR) show a composition bias toward basic residues.

This sequence belongs to the THOC2 family. In terms of assembly, component of the THO subcomplex, which is composed of THOC1, THOC2, THOC3, THOC5, THOC6 and THOC7. The THO subcomplex interacts with DDX39B to form the THO-DDX39B complex which multimerizes into a 28-subunit tetrameric assembly. Component of the transcription/export (TREX) complex at least composed of ALYREF/THOC4, DDX39B, SARNP/CIP29, CHTOP and the THO subcomplex; in the complex interacts with THOC1, THOC3, THOC5, THOC7 and DDX39B. TREX seems to have a dynamic structure involving ATP-dependent remodeling. Interacts with POLDIP3 and ZC3H11A. In terms of tissue distribution, expressed in the hippocampus and the cerebral cortex.

The protein localises to the nucleus. Its subcellular location is the nucleus speckle. It is found in the cytoplasm. Its function is as follows. Component of the THO subcomplex of the TREX complex which is thought to couple mRNA transcription, processing and nuclear export, and which specifically associates with spliced mRNA and not with unspliced pre-mRNA. Required for efficient export of polyadenylated RNA and spliced mRNA. The THOC1-THOC2-THOC3 core complex alone is sufficient to bind export factor NXF1-NXT1 and promote ATPase activity of DDX39B; in the complex THOC2 is the only component that directly interacts with DDX39B. TREX is recruited to spliced mRNAs by a transcription-independent mechanism, binds to mRNA upstream of the exon-junction complex (EJC) and is recruited in a splicing- and cap-dependent manner to a region near the 5' end of the mRNA where it functions in mRNA export to the cytoplasm via the TAP/NXF1 pathway. Required for NXF1 localization to the nuclear rim. THOC2 (and probably the THO complex) is involved in releasing mRNA from nuclear speckle domains. (Microbial infection) The TREX complex is essential for the export of Kaposi's sarcoma-associated herpesvirus (KSHV) intronless mRNAs and infectious virus production. This is THO complex subunit 2 (THOC2) from Homo sapiens (Human).